Here is a 218-residue protein sequence, read N- to C-terminus: Small ribosomal subunit protein uS3 (218 aa).

Residues 39–107 (IRDYIKSKLL…QISINIVEIK (69 aa)) form the KH type-2 domain.

This sequence belongs to the universal ribosomal protein uS3 family. In terms of assembly, part of the 30S ribosomal subunit. Forms a tight complex with proteins S10 and S14.

Binds the lower part of the 30S subunit head. Binds mRNA in the 70S ribosome, positioning it for translation. The polypeptide is Small ribosomal subunit protein uS3 (Desulforudis audaxviator (strain MP104C)).